The chain runs to 102 residues: Small ribosomal subunit protein uS10 (102 aa).

The disordered stretch occupies residues 34–61 (MAGPIPLPTKTLKVTTRKSTDGEGSSSF).

Belongs to the universal ribosomal protein uS10 family. Part of the 30S ribosomal subunit.

Functionally, involved in the binding of tRNA to the ribosomes. The chain is Small ribosomal subunit protein uS10 from Methanococcus aeolicus (strain ATCC BAA-1280 / DSM 17508 / OCM 812 / Nankai-3).